The sequence spans 208 residues: Imidazoleglycerol-phosphate dehydratase (208 aa).

The segment at methionine 1–serine 22 is disordered.

The protein belongs to the imidazoleglycerol-phosphate dehydratase family.

It localises to the cytoplasm. It catalyses the reaction D-erythro-1-(imidazol-4-yl)glycerol 3-phosphate = 3-(imidazol-4-yl)-2-oxopropyl phosphate + H2O. It participates in amino-acid biosynthesis; L-histidine biosynthesis; L-histidine from 5-phospho-alpha-D-ribose 1-diphosphate: step 6/9. The sequence is that of Imidazoleglycerol-phosphate dehydratase from Haloquadratum walsbyi (strain DSM 16790 / HBSQ001).